The primary structure comprises 463 residues: Cysteine--tRNA ligase (463 aa).

C29 serves as a coordination point for Zn(2+). The 'HIGH' region signature appears at 31 to 41 (PTVYDFAHIGN). 3 residues coordinate Zn(2+): C227, H252, and E256. The short motif at 285-289 (KMSKS) is the 'KMSKS' region element. K288 contacts ATP.

It belongs to the class-I aminoacyl-tRNA synthetase family. As to quaternary structure, monomer. Zn(2+) serves as cofactor.

The protein localises to the cytoplasm. It carries out the reaction tRNA(Cys) + L-cysteine + ATP = L-cysteinyl-tRNA(Cys) + AMP + diphosphate. This is Cysteine--tRNA ligase from Rhodopseudomonas palustris (strain ATCC BAA-98 / CGA009).